Reading from the N-terminus, the 247-residue chain is MLPSQEASKLYHEHYMRNSRAIGVLWAIFTICFAIINVVVFIQPYWVGDSVSTPKPGYFGLFHYCVGSGLAGRELTCRGSFTDFSTIPSSAFKAAAFFVLLSMVLILGCITCFSLFFFCNTATVYKICAWMQLLAALCLVLGCMIFPDGWDAETIRDMCGAKTGKYSLGDCSVRWAYILAIIGILNALILSFLAFVLGNRQTDLLQEELKPENKDFVGSTVSSVLRPGGDVSGWGVLPCPVAHSQGP.

4 helical membrane-spanning segments follow: residues 22–42, 97–117, 127–147, and 178–198; these read IGVL…VVFI, FFVL…SLFF, ICAW…MIFP, and ILAI…FVLG.

Belongs to the LHFP family. Interacts with GABA(A) receptor subunits. Identified in a complex of 720 kDa composed of LHFPL4, NLGN2, GABRA1, GABRB2, GABRG2 and GABRB3. Interacts with GABRB3. Interacts with GABRA2. Interacts with GABRG2. Interacts with GABRA1. Interacts with NLGN2; leading to mutual regulation of protein level and synaptic clustering.

The protein resides in the cell projection. It is found in the dendrite. Its subcellular location is the postsynaptic cell membrane. Functionally, plays a role in the regulation of inhibitory synapse formation and function by being involved in maintening gamma-aminobutyric acid receptors (GABAARs) clustering and their associated scaffold proteins at inhibitory synaptic sites. Acts in concert with NLGN2 to recruit or stabilize GABAARs. This Homo sapiens (Human) protein is LHFPL tetraspan subfamily member 4 protein.